Reading from the N-terminus, the 425-residue chain is Serine--tRNA ligase (425 aa).

231-233 (TAE) contributes to the L-serine binding site. 262–264 (RSE) is a binding site for ATP. Residue Glu-285 coordinates L-serine. ATP is bound at residue 349–352 (EISS). Residue Ser-385 coordinates L-serine.

The protein belongs to the class-II aminoacyl-tRNA synthetase family. Type-1 seryl-tRNA synthetase subfamily. In terms of assembly, homodimer. The tRNA molecule binds across the dimer.

It is found in the cytoplasm. The catalysed reaction is tRNA(Ser) + L-serine + ATP = L-seryl-tRNA(Ser) + AMP + diphosphate + H(+). It catalyses the reaction tRNA(Sec) + L-serine + ATP = L-seryl-tRNA(Sec) + AMP + diphosphate + H(+). It participates in aminoacyl-tRNA biosynthesis; selenocysteinyl-tRNA(Sec) biosynthesis; L-seryl-tRNA(Sec) from L-serine and tRNA(Sec): step 1/1. Its function is as follows. Catalyzes the attachment of serine to tRNA(Ser). Is also able to aminoacylate tRNA(Sec) with serine, to form the misacylated tRNA L-seryl-tRNA(Sec), which will be further converted into selenocysteinyl-tRNA(Sec). The polypeptide is Serine--tRNA ligase (Bartonella quintana (strain Toulouse) (Rochalimaea quintana)).